A 379-amino-acid polypeptide reads, in one-letter code: Queuine tRNA-ribosyltransferase (379 aa).

The active-site Proton acceptor is the Asp-94. Substrate contacts are provided by residues 94-98 (DSGGF), Asp-148, Gln-191, and Gly-218. The segment at 249–255 (GVGSPDS) is RNA binding. Asp-268 acts as the Nucleophile in catalysis. The RNA binding; important for wobble base 34 recognition stretch occupies residues 273 to 277 (TRIAR). Zn(2+) is bound by residues Cys-306, Cys-308, Cys-311, and His-337.

This sequence belongs to the queuine tRNA-ribosyltransferase family. In terms of assembly, homodimer. Within each dimer, one monomer is responsible for RNA recognition and catalysis, while the other monomer binds to the replacement base PreQ1. Zn(2+) serves as cofactor.

The catalysed reaction is 7-aminomethyl-7-carbaguanine + guanosine(34) in tRNA = 7-aminomethyl-7-carbaguanosine(34) in tRNA + guanine. It participates in tRNA modification; tRNA-queuosine biosynthesis. Catalyzes the base-exchange of a guanine (G) residue with the queuine precursor 7-aminomethyl-7-deazaguanine (PreQ1) at position 34 (anticodon wobble position) in tRNAs with GU(N) anticodons (tRNA-Asp, -Asn, -His and -Tyr). Catalysis occurs through a double-displacement mechanism. The nucleophile active site attacks the C1' of nucleotide 34 to detach the guanine base from the RNA, forming a covalent enzyme-RNA intermediate. The proton acceptor active site deprotonates the incoming PreQ1, allowing a nucleophilic attack on the C1' of the ribose to form the product. After dissociation, two additional enzymatic reactions on the tRNA convert PreQ1 to queuine (Q), resulting in the hypermodified nucleoside queuosine (7-(((4,5-cis-dihydroxy-2-cyclopenten-1-yl)amino)methyl)-7-deazaguanosine). This chain is Queuine tRNA-ribosyltransferase, found in Bacillus anthracis (strain CDC 684 / NRRL 3495).